We begin with the raw amino-acid sequence, 483 residues long: MHHMTLAEIARGLADKKFSSEELTKTLLARIAEHDPKVNSFISLTEELALSQAKAADARRANGEQGALLGAPIAHKDLFCTQGIRTSCGSKMLDNFKAPYDATVVSKLAAAGAVTLGKTNMDEFAMGSANESSYYGAVKNPWNLDHVPGGSSGGSAAAVAARFLPAATATDTGGSIRQPAAFTNLTGLKPTYGRVSRWGMIAYASSLDQGGPLARTAEDCAILLQGMAGFDKQDSTSIDEPVPDYSASLNTSIKGLRIGVPKEYFSAGLDPRIAELVHNSVKTLEGLGAVIKEISLPNNQHAIPAYYVIAPAEASSNLSRFDGVRFGYRCENPKDLTDLYKRSRGEGFGAEVQRRIMVGAYALSAGYYDAYYLKAQKIRRLIKNDFMAAFEEVDVILGPTTPNPAWKIGAKTGDPIAEYLEDLYTITANLAGLPGLSMPAGFVDGLPVGVQLLAPYFQEGRLLNVAHQYQLNTDWHTRTPTGF.

Catalysis depends on charge relay system residues Lys76 and Ser151. Ser175 (acyl-ester intermediate) is an active-site residue.

Belongs to the amidase family. GatA subfamily. In terms of assembly, heterotrimer of A, B and C subunits.

The catalysed reaction is L-glutamyl-tRNA(Gln) + L-glutamine + ATP + H2O = L-glutaminyl-tRNA(Gln) + L-glutamate + ADP + phosphate + H(+). Its function is as follows. Allows the formation of correctly charged Gln-tRNA(Gln) through the transamidation of misacylated Glu-tRNA(Gln) in organisms which lack glutaminyl-tRNA synthetase. The reaction takes place in the presence of glutamine and ATP through an activated gamma-phospho-Glu-tRNA(Gln). The protein is Glutamyl-tRNA(Gln) amidotransferase subunit A of Pseudomonas fluorescens (strain SBW25).